The following is a 504-amino-acid chain: Maturase K (504 aa).

This sequence belongs to the intron maturase 2 family. MatK subfamily.

The protein localises to the plastid. It is found in the chloroplast. Functionally, usually encoded in the trnK tRNA gene intron. Probably assists in splicing its own and other chloroplast group II introns. This is Maturase K from Eichhornia crassipes (Water hyacinth).